Reading from the N-terminus, the 135-residue chain is Hemoglobin subunit beta-3 (135 aa).

The Globin domain maps to His2 to Gln135. 2 residues coordinate heme b: His57 and His81.

The protein belongs to the globin family. In terms of assembly, hb 3 is a heterotetramer of two alpha and two beta-3 chains. Red blood cells (at protein level).

In terms of biological role, involved in oxygen transport from gills to the various peripheral tissues. This is Hemoglobin subunit beta-3 from Somniosus microcephalus (Greenland sleeper shark).